Consider the following 184-residue polypeptide: Pyridoxal 5'-phosphate synthase subunit PdxT (184 aa).

46–48 contacts L-glutamine; it reads GES. The active-site Nucleophile is the cysteine 75. Residues arginine 101 and 129 to 130 contribute to the L-glutamine site; that span reads IR. Residues histidine 165 and glutamate 167 each act as charge relay system in the active site.

This sequence belongs to the glutaminase PdxT/SNO family. In terms of assembly, in the presence of PdxS, forms a dodecamer of heterodimers. Only shows activity in the heterodimer.

It catalyses the reaction aldehydo-D-ribose 5-phosphate + D-glyceraldehyde 3-phosphate + L-glutamine = pyridoxal 5'-phosphate + L-glutamate + phosphate + 3 H2O + H(+). The enzyme catalyses L-glutamine + H2O = L-glutamate + NH4(+). Its pathway is cofactor biosynthesis; pyridoxal 5'-phosphate biosynthesis. Its function is as follows. Catalyzes the hydrolysis of glutamine to glutamate and ammonia as part of the biosynthesis of pyridoxal 5'-phosphate. The resulting ammonia molecule is channeled to the active site of PdxS. In Staphylococcus haemolyticus (strain JCSC1435), this protein is Pyridoxal 5'-phosphate synthase subunit PdxT.